Reading from the N-terminus, the 433-residue chain is MKNELMQRLRLKYPPPDGYCRWGRIQDVSATLLNAWLPGVFMGELCCIKPGEELAEVVGINGSKALLSPFTSTIGLHCGQQVMALRRRHQVPVGEALLGRVIDGFGRPLDGRELPDVCWKDYDAMPPPAMVRQPITQPLMTGIRAIDSVATCGEGQRVGIFSAPGVGKSTLLAMLCNAPDADSNVLVLIGERGREVREFIDFTLSEETRKRCVIVVATSDRPALERVRALFVATTIAEFFRDNGKRVVLLADSLTRYARAAREIALAAGETAVSGEYPPGVFSALPRLLERTGMGEKGSITAFYTVLVEGDDMNEPLADEVRSLLDGHIVLSRRLAERGHYPAIDVLATLSRVFPVVTSHEHRQLAAILRRCLALYQEVELLIRIGEYQRGVDTDTDKAIDTYPDICTFLRQSKDEVCGPELLIEKLHQILTE.

ATP is bound at residue 165–170 (GVGKST).

It belongs to the ATPase alpha/beta chains family. T3SS ATPase subfamily. The core secretion machinery of the T3SS is composed of approximately 20 different proteins, including cytoplasmic components, a base, an export apparatus and a needle. This subunit is part of the cytosolic complex. Forms homohexamers. Forms a complex with SsaK/SctL (stator protein) and SsaQ/SctQ (the major sorting platform component). Interacts with the T3SS-2 specific chaperones SsaE, SseA, SscA, SscB, and SrcA.

It is found in the cytoplasm. The catalysed reaction is ATP + H2O + cellular proteinSide 1 = ADP + phosphate + cellular proteinSide 2.. In terms of biological role, ATPase component of the type III secretion system (T3SS), also called injectisome, which is used to inject bacterial effector proteins into eukaryotic host cells. Acts as a molecular motor to provide the energy that is required for the export of proteins. Required for type III secretion apparatus (T3SA) formation, secretion of a subset of SPI-2 effectors and virulence. May play a critical role in T3SS substrate recognition, disassembly of the effector/chaperone complex and unfolding of the effector in an ATP-dependent manner prior to secretion. Releases the effector protein SseB from the T3SS-2 specific chaperone SsaE in an ATP-dependent manner. This chain is SPI-2 type 3 secretion system ATPase, found in Salmonella typhimurium (strain LT2 / SGSC1412 / ATCC 700720).